A 437-amino-acid chain; its full sequence is MQQFRFIDLFAGIGGFRLGLEAVGGVCVASAEIDQQAIKVYWQNWPTDGVDHNLGDITQIQQLPAHDVLVGGVPCQPWSIAGKNQAFDDPRGQLWADVIRLVQINQPKAFIFENVKGLVDPRNRLCLEIILDSFKDLGYSVFYKLLNSFDFGVAQNRDRVFIVGIQQKLDLNGFSFPEYAESDQRLYHILDNLEAPETKLESIPIQRNLFGERIEVGYNKLTPRGAFNDFFILNDIRNGPTSIHSWEIYPTTEREKHICMIIMRNRRNSRYGNCDGNPMSYSDIAELVVDLAENELQILVKKRILRQYPDGKYEFFNRRLSGGIDGTYRIFMPNARFFGTLTARGMHDEIAEINVSGANAAEYKYNFIQQVLIPKRYRPITVSEAARLQGFPSTFKFHSNQSANFRLIGNSVAPPVIVALGKRLQCVKLFEQELCEV.

The SAM-dependent MTase C5-type domain maps to 4-431; it reads FRFIDLFAGI…KRLQCVKLFE (428 aa). Cys75 is a catalytic residue.

This sequence belongs to the class I-like SAM-binding methyltransferase superfamily. C5-methyltransferase family.

It carries out the reaction a 2'-deoxycytidine in DNA + S-adenosyl-L-methionine = a 5-methyl-2'-deoxycytidine in DNA + S-adenosyl-L-homocysteine + H(+). A methylase that recognizes the double-stranded sequence 5'-GGWCC-3', methylates C-? on both strands, and protects the DNA from cleavage by the HgiEI endonuclease. This system is more active than isoschizomeric RM.HgiBI. In Herpetosiphon aurantiacus (Herpetosiphon giganteus), this protein is Type II methylase M.HgiEI.